The primary structure comprises 426 residues: Serine--tRNA ligase (426 aa).

L-serine is bound at residue 231–233 (TSE). 262–264 (RSE) serves as a coordination point for ATP. Glutamate 285 is an L-serine binding site. 349–352 (EISS) is an ATP binding site. Serine 385 lines the L-serine pocket.

This sequence belongs to the class-II aminoacyl-tRNA synthetase family. Type-1 seryl-tRNA synthetase subfamily. As to quaternary structure, homodimer. The tRNA molecule binds across the dimer.

The protein resides in the cytoplasm. The enzyme catalyses tRNA(Ser) + L-serine + ATP = L-seryl-tRNA(Ser) + AMP + diphosphate + H(+). The catalysed reaction is tRNA(Sec) + L-serine + ATP = L-seryl-tRNA(Sec) + AMP + diphosphate + H(+). Its pathway is aminoacyl-tRNA biosynthesis; selenocysteinyl-tRNA(Sec) biosynthesis; L-seryl-tRNA(Sec) from L-serine and tRNA(Sec): step 1/1. In terms of biological role, catalyzes the attachment of serine to tRNA(Ser). Is also able to aminoacylate tRNA(Sec) with serine, to form the misacylated tRNA L-seryl-tRNA(Sec), which will be further converted into selenocysteinyl-tRNA(Sec). This is Serine--tRNA ligase from Legionella pneumophila (strain Paris).